A 233-amino-acid chain; its full sequence is Large ribosomal subunit protein uL1 (233 aa).

The protein belongs to the universal ribosomal protein uL1 family. As to quaternary structure, part of the 50S ribosomal subunit.

In terms of biological role, binds directly to 23S rRNA. The L1 stalk is quite mobile in the ribosome, and is involved in E site tRNA release. Functionally, protein L1 is also a translational repressor protein, it controls the translation of the L11 operon by binding to its mRNA. This is Large ribosomal subunit protein uL1 from Nautilia profundicola (strain ATCC BAA-1463 / DSM 18972 / AmH).